The sequence spans 187 residues: Crossover junction endodeoxyribonuclease RuvC (187 aa).

Active-site residues include Asp-7, Glu-67, and Asp-140. Mg(2+)-binding residues include Asp-7, Glu-67, and Asp-140.

The protein belongs to the RuvC family. In terms of assembly, homodimer which binds Holliday junction (HJ) DNA. The HJ becomes 2-fold symmetrical on binding to RuvC with unstacked arms; it has a different conformation from HJ DNA in complex with RuvA. In the full resolvosome a probable DNA-RuvA(4)-RuvB(12)-RuvC(2) complex forms which resolves the HJ. It depends on Mg(2+) as a cofactor.

The protein localises to the cytoplasm. The enzyme catalyses Endonucleolytic cleavage at a junction such as a reciprocal single-stranded crossover between two homologous DNA duplexes (Holliday junction).. In terms of biological role, the RuvA-RuvB-RuvC complex processes Holliday junction (HJ) DNA during genetic recombination and DNA repair. Endonuclease that resolves HJ intermediates. Cleaves cruciform DNA by making single-stranded nicks across the HJ at symmetrical positions within the homologous arms, yielding a 5'-phosphate and a 3'-hydroxyl group; requires a central core of homology in the junction. The consensus cleavage sequence is 5'-(A/T)TT(C/G)-3'. Cleavage occurs on the 3'-side of the TT dinucleotide at the point of strand exchange. HJ branch migration catalyzed by RuvA-RuvB allows RuvC to scan DNA until it finds its consensus sequence, where it cleaves and resolves the cruciform DNA. This Prosthecochloris aestuarii (strain DSM 271 / SK 413) protein is Crossover junction endodeoxyribonuclease RuvC.